The chain runs to 135 residues: Large ribosomal subunit protein eL32 (135 aa).

It belongs to the eukaryotic ribosomal protein eL32 family.

In Methanococcus maripaludis (strain C6 / ATCC BAA-1332), this protein is Large ribosomal subunit protein eL32.